Here is a 55-residue protein sequence, read N- to C-terminus: Large ribosomal subunit protein uL15 (55 aa).

It belongs to the universal ribosomal protein uL15 family. Part of the 50S ribosomal subunit.

Its function is as follows. Binds to the 23S rRNA. This is Large ribosomal subunit protein uL15 (rplO) from Lactococcus lactis subsp. cremoris (Streptococcus cremoris).